The primary structure comprises 463 residues: Nicotinate phosphoribosyltransferase pncB2 (463 aa).

The residue at position 202 (His202) is a Phosphohistidine.

This sequence belongs to the NAPRTase family. Transiently phosphorylated on a His residue during the reaction cycle. Phosphorylation strongly increases the affinity for substrates and increases the rate of nicotinate D-ribonucleotide production. Dephosphorylation regenerates the low-affinity form of the enzyme, leading to product release.

It carries out the reaction nicotinate + 5-phospho-alpha-D-ribose 1-diphosphate + ATP + H2O = nicotinate beta-D-ribonucleotide + ADP + phosphate + diphosphate. Its pathway is cofactor biosynthesis; NAD(+) biosynthesis; nicotinate D-ribonucleotide from nicotinate: step 1/1. Its function is as follows. Involved in the Preiss-Handler pathway, which is a recycling route that permits the salvage of free nicotinamide (NM) and nicotinic acid (Na) involved in the NAD biosynthesis. Catalyzes the synthesis of beta-nicotinate D-ribonucleotide from nicotinate and 5-phospho-D-ribose 1-phosphate at the expense of ATP. It is not able to use nicotinamide. PncB2 appears to be responsible for the increased salvage synthesis of NAD during infection of host tissues. The protein is Nicotinate phosphoribosyltransferase pncB2 (pncB2) of Mycobacterium tuberculosis (strain CDC 1551 / Oshkosh).